Consider the following 523-residue polypeptide: UPF0329 protein ECU02_0050 (523 aa).

The segment at 326-386 is disordered; the sequence is EEKAKSKKRG…KTGKKSEGGR (61 aa). The segment covering 330 to 339 has biased composition (basic residues); the sequence is KSKKRGKRKS. Over residues 344–353 the composition is skewed to basic and acidic residues; sequence EAKEEEKKES. Residues 354-368 show a composition bias toward acidic residues; sequence ETEEVEAGEEVEMPS.

It belongs to the UPF0329 family.

The chain is UPF0329 protein ECU02_0050 from Encephalitozoon cuniculi (strain GB-M1) (Microsporidian parasite).